Here is a 135-residue protein sequence, read N- to C-terminus: Galectin-1 (135 aa).

Ala-2 is modified (N-acetylalanine). The 132-residue stretch at 4-135 (GLVASNLNLK…DFKIKCVAFE (132 aa)) folds into the Galectin domain. N6-acetyllysine occurs at positions 13, 19, and 29. Ser-30 bears the Phosphoserine mark. A beta-D-galactoside is bound by residues 45 to 49 (HFNPR), His-53, Asn-62, and 69 to 72 (WGTE). Position 108 is an N6-acetyllysine; alternate (Lys-108). Lys-108 bears the N6-succinyllysine; alternate mark. At Lys-128 the chain carries N6-acetyllysine.

In terms of assembly, homodimer. Binds LGALS3BP. Interacts with CD2, CD3, CD4, CD6, CD7, CD43, ALCAM and CD45. Interacts with laminin (via poly-N-acetyllactosamine). Interacts with SUSD2. Interacts with cargo receptor TMED10; the interaction mediates the translocation from the cytoplasm into the ERGIC (endoplasmic reticulum-Golgi intermediate compartment) and thereby secretion. Interacts with CD69.

It is found in the secreted. It localises to the extracellular space. The protein resides in the extracellular matrix. Its subcellular location is the cytoplasm. Its function is as follows. Lectin that binds beta-galactoside and a wide array of complex carbohydrates. Plays a role in regulating apoptosis, cell proliferation and cell differentiation. Inhibits CD45 protein phosphatase activity and therefore the dephosphorylation of Lyn kinase. Strong inducer of T-cell apoptosis. Plays a negative role in Th17 cell differentiation via activation of the receptor CD69. The sequence is that of Galectin-1 (Lgals1) from Rattus norvegicus (Rat).